A 259-amino-acid chain; its full sequence is ATP synthase subunit b 3 (259 aa).

Residues 5 to 27 (WWTLGLQAINVLILIWILSRFLF) traverse the membrane as a helical segment.

The protein belongs to the ATPase B chain family. In terms of assembly, F-type ATPases have 2 components, F(1) - the catalytic core - and F(0) - the membrane proton channel. F(1) has five subunits: alpha(3), beta(3), gamma(1), delta(1), epsilon(1). F(0) has three main subunits: a(1), b(2) and c(10-14). The alpha and beta chains form an alternating ring which encloses part of the gamma chain. F(1) is attached to F(0) by a central stalk formed by the gamma and epsilon chains, while a peripheral stalk is formed by the delta and b chains.

Its subcellular location is the cell inner membrane. F(1)F(0) ATP synthase produces ATP from ADP in the presence of a proton or sodium gradient. F-type ATPases consist of two structural domains, F(1) containing the extramembraneous catalytic core and F(0) containing the membrane proton channel, linked together by a central stalk and a peripheral stalk. During catalysis, ATP synthesis in the catalytic domain of F(1) is coupled via a rotary mechanism of the central stalk subunits to proton translocation. In terms of biological role, component of the F(0) channel, it forms part of the peripheral stalk, linking F(1) to F(0). This chain is ATP synthase subunit b 3, found in Beijerinckia indica subsp. indica (strain ATCC 9039 / DSM 1715 / NCIMB 8712).